The chain runs to 234 residues: MAERIPAVTVKTDGRKRRWHQHKVERRNELVDGTIEAIRRHGRFLSMDEIAAEIGVSKTVLYRYFVDKNDLTTAVMMRFTQTTLIPNMIAALSADMDGFELTREIIRVYVETVAAQPEPYRFVMANSSASKSKVIADSERIIARMLAVMLRRRMQEAGMDTGGVEPWAYLIVGGVQLATHSWMSDPRMSSDELIDYLTMLSWSALCGIVEAGGSLEKFREQPHPSPIVPAWGQV.

The region spanning Val-24–Thr-83 is the HTH tetR-type domain. Residues Ser-46–Phe-65 constitute a DNA-binding region (H-T-H motif).

This is an uncharacterized protein from Mycobacterium tuberculosis (strain CDC 1551 / Oshkosh).